The sequence spans 309 residues: Thioredoxin reductase (309 aa).

Residue 35–42 coordinates FAD; it reads EKQFPGGK. Cysteine 134 and cysteine 137 form a disulfide bridge. 277–286 provides a ligand contact to FAD; the sequence is DIVDKNVRQI.

Belongs to the class-II pyridine nucleotide-disulfide oxidoreductase family. In terms of assembly, homodimer. It depends on FAD as a cofactor.

Its subcellular location is the cytoplasm. The catalysed reaction is [thioredoxin]-dithiol + NADP(+) = [thioredoxin]-disulfide + NADPH + H(+). This is Thioredoxin reductase (trxB) from Ureaplasma parvum serovar 3 (strain ATCC 700970).